The primary structure comprises 515 residues: Iridoid oxidase (515 aa).

Helical transmembrane passes span 8–28 (SLNPVTVAISAGFLLLLIIFV) and 180–200 (AVQLSRFLFLMAFNLVGNLML). Heme is bound at residue cysteine 455.

This sequence belongs to the cytochrome P450 family. As to expression, expressed in the leaf internal phloem-associated parenchyma (IPAP) inside the mesophyll.

It localises to the endoplasmic reticulum membrane. The catalysed reaction is (+)-cis-trans-nepetalactol + 3 reduced [NADPH--hemoprotein reductase] + 3 O2 = 7-deoxyloganetate + 3 oxidized [NADPH--hemoprotein reductase] + 4 H2O + 4 H(+). It participates in alkaloid biosynthesis. Its function is as follows. Component of the seco-iridoid and derivatives monoterpenoid indole alkaloids (MIAs, e.g. vincristine, quinine, and strychnine) biosynthesis pathway. Catalyzes the conversion of cis-trans-nepetalactol (iridodial) into 7-deoxyloganetic acid. Also converts iridotrial into 7-deoxyloganetic acid. This is Iridoid oxidase from Catharanthus roseus (Madagascar periwinkle).